A 66-amino-acid polypeptide reads, in one-letter code: DNA-directed RNA polymerase subunit Rpo10 (66 aa).

Zn(2+) contacts are provided by C7, C10, C47, and C48.

It belongs to the archaeal Rpo10/eukaryotic RPB10 RNA polymerase subunit family. In terms of assembly, part of the RNA polymerase complex. It depends on Zn(2+) as a cofactor.

The protein resides in the cytoplasm. The enzyme catalyses RNA(n) + a ribonucleoside 5'-triphosphate = RNA(n+1) + diphosphate. DNA-dependent RNA polymerase (RNAP) catalyzes the transcription of DNA into RNA using the four ribonucleoside triphosphates as substrates. This chain is DNA-directed RNA polymerase subunit Rpo10, found in Halobacterium salinarum (strain ATCC 29341 / DSM 671 / R1).